We begin with the raw amino-acid sequence, 984 residues long: UPF0592 protein YDL073W (984 aa).

The interval 675–712 (KNHKIMDGYEGGQENEDNDEDSEDSGSHKNKRKEGNSS) is disordered. Residues 687-698 (QENEDNDEDSED) show a composition bias toward acidic residues.

Belongs to the UPF0592 family.

In Saccharomyces cerevisiae (strain ATCC 204508 / S288c) (Baker's yeast), this protein is UPF0592 protein YDL073W.